The sequence spans 335 residues: GTPase Obg (335 aa).

Positions 1 to 159 (MKFVDSAKIS…IELEMELKLM (159 aa)) constitute an Obg domain. One can recognise an OBG-type G domain in the interval 160-323 (ADVGLVGFPN…LKDELWRQIS (164 aa)). GTP contacts are provided by residues 166 to 173 (GFPNAGKS), 191 to 195 (FTTLV), 213 to 216 (DIPG), 280 to 283 (TKMD), and 304 to 306 (SSV). 2 residues coordinate Mg(2+): Ser-173 and Thr-193.

This sequence belongs to the TRAFAC class OBG-HflX-like GTPase superfamily. OBG GTPase family. Monomer. Requires Mg(2+) as cofactor.

It is found in the cytoplasm. An essential GTPase which binds GTP, GDP and possibly (p)ppGpp with moderate affinity, with high nucleotide exchange rates and a fairly low GTP hydrolysis rate. Plays a role in control of the cell cycle, stress response, ribosome biogenesis and in those bacteria that undergo differentiation, in morphogenesis control. This Chlorobaculum parvum (strain DSM 263 / NCIMB 8327) (Chlorobium vibrioforme subsp. thiosulfatophilum) protein is GTPase Obg.